Consider the following 262-residue polypeptide: Ribosomal RNA small subunit methyltransferase A (262 aa).

Residues asparagine 12, leucine 14, glycine 38, glutamate 60, aspartate 83, and asparagine 102 each coordinate S-adenosyl-L-methionine.

The protein belongs to the class I-like SAM-binding methyltransferase superfamily. rRNA adenine N(6)-methyltransferase family. RsmA subfamily.

Its subcellular location is the cytoplasm. It catalyses the reaction adenosine(1518)/adenosine(1519) in 16S rRNA + 4 S-adenosyl-L-methionine = N(6)-dimethyladenosine(1518)/N(6)-dimethyladenosine(1519) in 16S rRNA + 4 S-adenosyl-L-homocysteine + 4 H(+). Its function is as follows. Specifically dimethylates two adjacent adenosines (A1518 and A1519) in the loop of a conserved hairpin near the 3'-end of 16S rRNA in the 30S particle. May play a critical role in biogenesis of 30S subunits. The protein is Ribosomal RNA small subunit methyltransferase A of Pelagibacter ubique (strain HTCC1062).